The sequence spans 194 residues: Early E3 22.1 kDa glycoprotein (194 aa).

Residues Asn-19, Asn-60, Asn-75, Asn-87, Asn-125, and Asn-138 are each glycosylated (N-linked (GlcNAc...) asparagine; by host).

The polypeptide is Early E3 22.1 kDa glycoprotein (Canine adenovirus serotype 1 (strain RI261) (CAdV-1)).